The sequence spans 201 residues: MSRYRGPRFKKIRRLGALPGLTSKRPRAGSDLRNQSRSGKRSQYRIRLEEKQKLRFHYGLTERQLLKYVRIAGKAKGSTGQVLLQLLEMRLDNILFRLGMASTIPGARQLVNHRHILVNGRIVDIPSYRCKPRDIITAKDEQKSRALIQNYLDSSPHEELPKHLTLHSFQYKGLVNQIIDSKWVGLKINELLVVEYYSRQT.

A disordered region spans residues 20–43; it reads GLTSKRPRAGSDLRNQSRSGKRSQ. The S4 RNA-binding domain maps to 89 to 149; the sequence is MRLDNILFRL…DEQKSRALIQ (61 aa).

It belongs to the universal ribosomal protein uS4 family. As to quaternary structure, part of the 30S ribosomal subunit. Contacts protein S5. The interaction surface between S4 and S5 is involved in control of translational fidelity.

Its subcellular location is the plastid. The protein resides in the chloroplast. Its function is as follows. One of the primary rRNA binding proteins, it binds directly to 16S rRNA where it nucleates assembly of the body of the 30S subunit. With S5 and S12 plays an important role in translational accuracy. The polypeptide is Small ribosomal subunit protein uS4c (rps4) (Buxus microphylla (Littleleaf boxwood)).